The primary structure comprises 400 residues: Elongation factor Tu (400 aa).

The tr-type G domain occupies 10-209; sequence KPHINIGTIG…AVDDYIPTPE (200 aa). Residues 19–26 are G1; sequence GHVDHGKT. 19-26 lines the GTP pocket; the sequence is GHVDHGKT. T26 lines the Mg(2+) pocket. The tract at residues 60–64 is G2; that stretch reads GITIS. The segment at 81–84 is G3; that stretch reads DCPG. Residues 81-85 and 136-139 contribute to the GTP site; these read DCPGH and NKVD. Residues 136 to 139 are G4; sequence NKVD. Residues 174 to 176 are G5; the sequence is SAK.

It belongs to the TRAFAC class translation factor GTPase superfamily. Classic translation factor GTPase family. EF-Tu/EF-1A subfamily. In terms of assembly, monomer.

The protein resides in the cytoplasm. It carries out the reaction GTP + H2O = GDP + phosphate + H(+). GTP hydrolase that promotes the GTP-dependent binding of aminoacyl-tRNA to the A-site of ribosomes during protein biosynthesis. The sequence is that of Elongation factor Tu from Herpetosiphon aurantiacus (Herpetosiphon giganteus).